Here is a 738-residue protein sequence, read N- to C-terminus: Glycogen [starch] synthase, muscle (738 aa).

S8 carries the post-translational modification Phosphoserine; by AMPK and PKA. S11 is subject to Phosphoserine. A UDP-binding site is contributed by K39. Positions 205 and 211 each coordinate UDP-alpha-D-glucose. Residues H291, E292, Q294, H297, and K301 each coordinate alpha-D-glucose 6-phosphate. R331 is a binding site for UDP. R331 contacts UDP-alpha-D-glucose. S412 bears the Phosphoserine mark. Alpha-D-glucose 6-phosphate is bound at residue H501. UDP-alpha-D-glucose is bound by residues E510, W512, and G513. A UDP-binding site is contributed by T515. The alpha-D-glucose 6-phosphate site is built by R582 and R586. The interval 632–738 (QGYRYPRPAS…PTSSLGEERN (107 aa)) is disordered. Phosphoserine occurs at positions 641 and 645. Phosphoserine; by GSK3-alpha and GSK3-beta is present on S649. Phosphoserine occurs at positions 652, 653, 657, and 672. The span at 682–695 (AKDRRNIRAPEWPR) shows a compositional bias: basic and acidic residues. 3 positions are modified to phosphoserine: S698, S709, and S711. Positions 698–738 (SCSSSTGGSKRSNSVDTGPSSSLSTPTEPLSPTSSLGEERN) are enriched in low complexity. T722 carries the phosphothreonine modification. S728 and S732 each carry phosphoserine.

The protein belongs to the glycosyltransferase 3 family. As to quaternary structure, part of the GYS1-GYG1 complex, a heterooctamer composed of a tetramer of GYS1 and 2 dimers of GYG1, where each GYS1 protomer binds to one GYG1 subunit (via GYG1 C-terminus); the GYS1 tetramer may dissociate from GYG1 dimers to continue glycogen polymerization on its own. In terms of processing, phosphorylation at Ser-8 by AMPK inactivates the enzyme activity. Primed phosphorylation at Ser-657 (site 5) by CSNK2A1 and CSNK2A2 is required for inhibitory phosphorylation at Ser-641 (site 3a), Ser-645 (site 3b), Ser-649 (site 3c) and Ser-653 (site 4) by GSK3A an GSK3B. Phosphorylated at Ser-641 by PASK, leading to inactivation; phosphorylation by PASK is inhibited by glycogen. Phosphorylated at Ser-641 by DYRK2, leading to inactivation. Dephosphorylation at Ser-641 and Ser-645 by PP1 activates the enzyme.

It catalyses the reaction [(1-&gt;4)-alpha-D-glucosyl](n) + UDP-alpha-D-glucose = [(1-&gt;4)-alpha-D-glucosyl](n+1) + UDP + H(+). It participates in glycan biosynthesis; glycogen biosynthesis. With respect to regulation, allosteric activation by glucose-6-phosphate. Phosphorylation reduces the activity towards UDP-glucose. When in the non-phosphorylated state, glycogen synthase does not require glucose-6-phosphate as an allosteric activator; when phosphorylated it does. Its function is as follows. Glycogen synthase participates in the glycogen biosynthetic process along with glycogenin and glycogen branching enzyme. Extends the primer composed of a few glucose units formed by glycogenin by adding new glucose units to it. In this context, glycogen synthase transfers the glycosyl residue from UDP-Glc to the non-reducing end of alpha-1,4-glucan. This Rattus norvegicus (Rat) protein is Glycogen [starch] synthase, muscle (Gys1).